We begin with the raw amino-acid sequence, 951 residues long: Cation channel sperm-associated auxiliary subunit epsilon (951 aa).

Positions 1–19 (MSAREVAVLLLWLSCYGSA) are cleaved as a signal peptide. Topologically, residues 20–903 (LWRYSTNSPN…ETFGLIPSPS (884 aa)) are extracellular. Intrachain disulfides connect Cys-57–Cys-71, Cys-101–Cys-206, Cys-246–Cys-336, and Cys-410–Cys-413. Asn-61 and Asn-114 each carry an N-linked (GlcNAc...) asparagine glycan. N-linked (GlcNAc...) asparagine glycans are attached at residues Asn-414, Asn-472, Asn-487, Asn-493, and Asn-535. 4 disulfides stabilise this stretch: Cys-583/Cys-690, Cys-703/Cys-885, Cys-719/Cys-752, and Cys-804/Cys-835. N-linked (GlcNAc...) asparagine glycosylation is present at Asn-796. N-linked (GlcNAc...) asparagine glycans are attached at residues Asn-854, Asn-881, and Asn-886. Residues 904–924 (VYLVASFLFVLMLLFFTILVL) traverse the membrane as a helical segment. Residues 925–951 (SYFRYMRIYRRYIYEPLHKPQRKRKKN) are Cytoplasmic-facing.

This sequence belongs to the CATSPERD family. In terms of assembly, component of the CatSper complex or CatSpermasome composed of the core pore-forming members CATSPER1, CATSPER2, CATSPER3 and CATSPER4 as well as auxiliary members CATSPERB, CATSPERG, CATSPERD, CATSPERE, CATSPERZ, C2CD6/CATSPERT, TMEM249, TMEM262 and EFCAB9. HSPA1 may be an additional auxiliary complex member. The core complex members CATSPER1, CATSPER2, CATSPER3 and CATSPER4 form a heterotetrameric channel. The auxiliary CATSPERB, CATSPERG, CATSPERD and CATSPERE subunits form a pavilion-like structure over the pore which stabilizes the complex through interactions with CATSPER4, CATSPER3, CATSPER1 and CATSPER2 respectively. TMEM262/CATSPERH interacts with CATSPERB, further stabilizing the complex. C2CD6/CATSPERT interacts at least with CATSPERD and is required for targeting the CatSper complex in the flagellar membrane.

It localises to the cell projection. The protein resides in the cilium. Its subcellular location is the flagellum membrane. Auxiliary component of the CatSper complex, a complex involved in sperm cell hyperactivation. Sperm cell hyperactivation is needed for sperm motility which is essential late in the preparation of sperm for fertilization. This is Cation channel sperm-associated auxiliary subunit epsilon from Homo sapiens (Human).